The chain runs to 168 residues: Transcription antitermination protein NusB (168 aa).

It belongs to the NusB family.

Functionally, involved in transcription antitermination. Required for transcription of ribosomal RNA (rRNA) genes. Binds specifically to the boxA antiterminator sequence of the ribosomal RNA (rrn) operons. This chain is Transcription antitermination protein NusB, found in Deinococcus deserti (strain DSM 17065 / CIP 109153 / LMG 22923 / VCD115).